Here is a 943-residue protein sequence, read N- to C-terminus: Nuclear receptor coactivator 7 (943 aa).

At Met1 the chain carries N-acetylmethionine. Residues Met1 to Gln15 show a composition bias toward basic and acidic residues. Positions Met1–Glu32 form a coiled coil. The interval Met1–Arg83 is disordered. Ser92 is subject to Phosphoserine. One can recognise a LysM domain in the interval Met117 to Val160. A Phosphothreonine modification is found at Thr137. Residues Thr169–Glu189 form a disordered region. A compositionally biased stretch (polar residues) spans Pro177 to Asp187. Phosphoserine is present on residues Ser182, Ser186, Ser211, Ser212, and Ser214. The tract at residues Glu334 to Asp369 is disordered. Residues Lys349 to Asp369 are compositionally biased toward basic and acidic residues. 3 positions are modified to phosphoserine: Ser442, Ser498, and Ser500. A compositionally biased stretch (basic and acidic residues) spans Glu486 to Gly499. Disordered regions lie at residues Glu486–Ser507 and Leu543–Pro576. Residues Ala782–Glu943 form the TLDc domain.

This sequence belongs to the OXR1 family. Interacts with ESR1, ESR2A, ESR2B, THRB, PPARG and RARA in a ligand-inducible manner. Interacts with the heterodimer AHR-ARNT. Highly expressed in brain and kidney. Weakly expressed in mammary gland, lung and testis. In brain, expression is found in neurons of cerebral cortex, thalamus, hypothalamus, hippocampus, cerebellum, striatum and choroid plexus.

The protein resides in the nucleus. Functionally, enhances the transcriptional activities of several nuclear receptors. Involved in the coactivation of different nuclear receptors, such as ESR1, THRB, PPARG and RARA. The protein is Nuclear receptor coactivator 7 (Ncoa7) of Mus musculus (Mouse).